The chain runs to 204 residues: Holliday junction branch migration complex subunit RuvA (204 aa).

Residues 1–64 (MIGRLQGILL…EDAHLLFGFS (64 aa)) are domain I. Positions 65 to 143 (AKTDRTLFRE…GIKQPDFFVE (79 aa)) are domain II. Residues 144–155 (SSHVGAVDPVTT) form a flexible linker region. The interval 156–204 (SPEVPAEEAVAALMALGYKASDAEKMVKRIAKPHLTSEQLIREALKAAL) is domain III.

It belongs to the RuvA family. Homotetramer. Forms an RuvA(8)-RuvB(12)-Holliday junction (HJ) complex. HJ DNA is sandwiched between 2 RuvA tetramers; dsDNA enters through RuvA and exits via RuvB. An RuvB hexamer assembles on each DNA strand where it exits the tetramer. Each RuvB hexamer is contacted by two RuvA subunits (via domain III) on 2 adjacent RuvB subunits; this complex drives branch migration. In the full resolvosome a probable DNA-RuvA(4)-RuvB(12)-RuvC(2) complex forms which resolves the HJ.

It is found in the cytoplasm. In terms of biological role, the RuvA-RuvB-RuvC complex processes Holliday junction (HJ) DNA during genetic recombination and DNA repair, while the RuvA-RuvB complex plays an important role in the rescue of blocked DNA replication forks via replication fork reversal (RFR). RuvA specifically binds to HJ cruciform DNA, conferring on it an open structure. The RuvB hexamer acts as an ATP-dependent pump, pulling dsDNA into and through the RuvAB complex. HJ branch migration allows RuvC to scan DNA until it finds its consensus sequence, where it cleaves and resolves the cruciform DNA. This chain is Holliday junction branch migration complex subunit RuvA, found in Mannheimia succiniciproducens (strain KCTC 0769BP / MBEL55E).